Reading from the N-terminus, the 117-residue chain is Minor capsid protein p17 (117 aa).

An N-linked (GlcNAc...) asparagine; by host glycan is attached at asparagine 12. A helical transmembrane segment spans residues 39 to 59 (AILLGILILLVIILIIVAIVY). Asparagine 61 and asparagine 97 each carry an N-linked (GlcNAc...) asparagine; by host glycan.

It belongs to the asfivirus minor capsid protein p17 family. Interacts with the minor capsid protein M1249L and with the hexon capsid protein p72 capsomers; these interactions form a rigid zipper structure that stabilizes the capsomers. Interacts with host STING1.

Its subcellular location is the virion membrane. The protein resides in the host endoplasmic reticulum membrane. It is found in the host Golgi apparatus membrane. In terms of biological role, together with the penton and the other minor capsid proteins (M1249L, p49), forms a complicated network immediately below the outer capsid shell, stabilizing the whole capsid. Three copies of p17 encircle each p72 capsomer in the inner capsid shell, anchoring p72 capsomers on the inner membrane. Required for the assembly of the capsid and icosahedral morphogenesis. Additionally, inhibits the host cGAS-STING pathway through its interaction with STING1 and subsequent interference of the recruitment of downstream components TBK1 and IKBKE. This African swine fever virus (strain Badajoz 1971 Vero-adapted) (Ba71V) protein is Minor capsid protein p17.